The following is a 67-amino-acid chain: Systemic RNA interference defective protein 5 (67 aa).

Over 1 to 18 (MPSKNCAKNLHACQWERD) the chain is Extracellular. A helical membrane pass occupies residues 19–39 (IALVFLGLMVLFNIGQVVYMN). The Cytoplasmic portion of the chain corresponds to 40 to 67 (RARLYRLIRRGAEQIPADDEEPIIGIRD).

As to expression, ubiquitously present in most tissues tested. Expressed in the somatic cells of intestine, muscle, neurons, somatic gonad and embryos but not in the germline (at protein level).

The protein localises to the late endosome membrane. In terms of biological role, plays a role in RNA-mediated gene silencing by mediating transport of both ingested and endogenous dsRNA between cells. Not required for the uptake of dsRNA from the intestinal lumen. The polypeptide is Systemic RNA interference defective protein 5 (Caenorhabditis elegans).